A 616-amino-acid chain; its full sequence is Chaperone protein HscA (616 aa).

The protein belongs to the heat shock protein 70 family.

In terms of biological role, chaperone involved in the maturation of iron-sulfur cluster-containing proteins. Has a low intrinsic ATPase activity which is markedly stimulated by HscB. Involved in the maturation of IscU. The polypeptide is Chaperone protein HscA (Escherichia coli O45:K1 (strain S88 / ExPEC)).